A 53-amino-acid chain; its full sequence is IgW transmembrane form Tm1T3/Tm6T3/Tm3C4 (53 aa).

The tract at residues 1–25 (VQAVPPDVKGEEGKEEVEDMDGDDN) is disordered. Residues 13 to 24 (GKEEVEDMDGDD) show a composition bias toward acidic residues. Residues 29–49 (VAAFAILFILSFLYSTFVTVV) form a helical membrane-spanning segment.

As to expression, expressed in the spleen, pancreas, peripheral blood lymphocytes and at low levels in the epigonal organ.

It localises to the membrane. The polypeptide is IgW transmembrane form Tm1T3/Tm6T3/Tm3C4 (Ginglymostoma cirratum (Nurse shark)).